Consider the following 253-residue polypeptide: L-cysteine S-thiosulfotransferase subunit SoxA (253 aa).

An N-terminal signal peptide occupies residues 1 to 17 (MGKWVTIIFVLFLYAIA). Residues 44–129 (VYAEQGRDMF…SIATYVATLS (86 aa)) form the Cytochrome c domain. Heme c is bound by residues Cys-64, Cys-67, His-68, Cys-102, Cys-165, Cys-168, and His-169. A substrate-binding site is contributed by Arg-210. A heme c-binding site is contributed by Cys-214. The active-site Cysteine persulfide intermediate is the Cys-214.

Belongs to the SoxA family. As to quaternary structure, heterodimer of SoxA and SoxX. It depends on heme c as a cofactor. In terms of processing, cysteine persulfide at Cys-214.

It is found in the periplasm. The enzyme catalyses L-cysteinyl-[SoxY protein] + thiosulfate + 2 Fe(III)-[cytochrome c] = S-sulfosulfanyl-L-cysteinyl-[SoxY protein] + 2 Fe(II)-[cytochrome c] + 2 H(+). It catalyses the reaction S-sulfanyl-L-cysteinyl-[SoxY protein] + thiosulfate + 2 Fe(III)-[cytochrome c] = S-(2-sulfodisulfanyl)-L-cysteinyl-[SoxY protein] + 2 Fe(II)-[cytochrome c] + 2 H(+). Its function is as follows. C-type diheme cytochrome, which is part of the SoxAX cytochrome complex involved in sulfur oxidation. The SoxAX complex catalyzes the formation of a heterodisulfide bond between the conserved cysteine residue on a sulfur carrier SoxYZ complex subunit SoxY and thiosulfate or other inorganic sulfur substrates. This leads to the liberation of two electrons, which may be transferred from the SoxAX complex to another cytochrome c that then channels them into the respiratory electron transport chain. Some electrons may be used for reductive CO(2) fixation. The sequence is that of L-cysteine S-thiosulfotransferase subunit SoxA from Hydrogenobacter thermophilus (strain DSM 6534 / IAM 12695 / TK-6).